The following is a 445-amino-acid chain: Phosphoglucosamine mutase (445 aa).

Catalysis depends on Ser99, which acts as the Phosphoserine intermediate. Residues Ser99, Asp242, Asp244, and Asp246 each contribute to the Mg(2+) site. Ser99 is subject to Phosphoserine.

Belongs to the phosphohexose mutase family. Requires Mg(2+) as cofactor. Activated by phosphorylation.

The catalysed reaction is alpha-D-glucosamine 1-phosphate = D-glucosamine 6-phosphate. Functionally, catalyzes the conversion of glucosamine-6-phosphate to glucosamine-1-phosphate. This is Phosphoglucosamine mutase from Helicobacter pylori (strain P12).